A 433-amino-acid polypeptide reads, in one-letter code: MDELLSMLNFLGMKDPEELFSDIPKSVRKKSIGIGGGLDEYRVIDRAMEIGRKNKTDMINFLGNGIYDRVIPEAVNYILSKPEFLDSYTPYQPEISQGMLQSMFEYQSLISDLMGMDVTNASMYDGYSALGEAARMAYRINGHSKILVPESSYDSKISVLRNYIWGLNMKIMKYRIGEDGMIDLDDLSSKIDSDTSAIVVENPNGYGILDKNIFGVKDIKKDAVLISYVDPISLGVVKPPGEYGSDIAVAEGQQLGIPMNFGGPLLGLMSFKMEHIRRSPGRIIGESIDSNGKRAYVMTLQTREQHIRRAKATSNICSNQALLTLAASAYLSIMGSTGLRKVALLTIKHSRMIKEKLSSIGVKPYFSTESFSDVMFRLERDVMEALASKNILGGLKLRQLISDTPMKDATFFTVTEKTDAAAIEKLAAALEVI.

It belongs to the GcvP family. N-terminal subunit subfamily. As to quaternary structure, the glycine cleavage system is composed of four proteins: P, T, L and H. In this organism, the P 'protein' is a heterodimer of two subunits.

It catalyses the reaction N(6)-[(R)-lipoyl]-L-lysyl-[glycine-cleavage complex H protein] + glycine + H(+) = N(6)-[(R)-S(8)-aminomethyldihydrolipoyl]-L-lysyl-[glycine-cleavage complex H protein] + CO2. The glycine cleavage system catalyzes the degradation of glycine. The P protein binds the alpha-amino group of glycine through its pyridoxal phosphate cofactor; CO(2) is released and the remaining methylamine moiety is then transferred to the lipoamide cofactor of the H protein. This chain is Probable glycine dehydrogenase (decarboxylating) subunit 1, found in Thermoplasma acidophilum (strain ATCC 25905 / DSM 1728 / JCM 9062 / NBRC 15155 / AMRC-C165).